Reading from the N-terminus, the 49-residue chain is Large ribosomal subunit protein bL33B (49 aa).

It belongs to the bacterial ribosomal protein bL33 family.

Its function is as follows. Plays a role in sporulation at high temperatures. In Bacillus subtilis (strain 168), this protein is Large ribosomal subunit protein bL33B (rpmGB).